The primary structure comprises 798 residues: Ubiquitin carboxyl-terminal hydrolase 10 (798 aa).

N-acetylalanine is present on A2. Residues A2–T100 are interaction with p53/TP53. A G3BP1-binding region spans residues P6 to F21. T24 is subject to Phosphothreonine. At T42 the chain carries Phosphothreonine; by ATM. Position 100 is a phosphothreonine (T100). Disordered stretches follow at residues G139–G166, A194–A257, and T307–S337. The span at T205–V219 shows a compositional bias: polar residues. Residues S211 and S226 each carry the phosphoserine modification. A compositionally biased stretch (basic and acidic residues) spans T307–K316. S321 bears the Phosphoserine mark. A compositionally biased stretch (polar residues) spans G328 to S337. Phosphoserine; by ATM is present on S337. S365 and S370 each carry phosphoserine. Residues R415 to V795 enclose the USP domain. C424 serves as the catalytic Nucleophile. The residue at position 547 (S547) is a Phosphoserine. Over residues E551–H562 the composition is skewed to polar residues. The tract at residues E551–Q594 is disordered. A phosphoserine mark is found at S563 and S576. Residues E566–E581 are compositionally biased toward acidic residues. H749 (proton acceptor) is an active-site residue.

The protein belongs to the peptidase C19 family. USP10 subfamily. As to quaternary structure, found in a deubiquitination complex with TANK, USP10 and ZC3H12A; this complex inhibits genotoxic stress- or interleukin-1-beta (IL1B)-mediated NF-kappa-B activation by promoting IKBKG or TRAF6 deubiquitination. Interacts with IKBKG; this interaction increases in response to DNA damage. Interacts with TANK; this interaction increases in response to DNA damage. Interacts with TRAF6; this interaction increases in response to DNA damage. Interacts with ZC3H12A; this interaction increases in response to DNA damage. Interacts with G3BP1 (via NTF2 domain) and G3BP2 (via NTF2 domain); inhibiting stress granule formation. In terms of processing, phosphorylated by ATM following DNA damage, leading to stabilization and translocation it to the nucleus. Ubiquitinated. Deubiquitinated by USP13. In terms of tissue distribution, widely expressed.

It localises to the cytoplasm. Its subcellular location is the nucleus. The protein localises to the early endosome. It carries out the reaction Thiol-dependent hydrolysis of ester, thioester, amide, peptide and isopeptide bonds formed by the C-terminal Gly of ubiquitin (a 76-residue protein attached to proteins as an intracellular targeting signal).. Specifically inhibited by spautin-1 (specific and potent autophagy inhibitor-1), a derivative of MBCQ that binds to USP10 and inhibits deubiquitinase activity. Regulated by PIK3C3/VPS34-containing complexes. Hydrolase that can remove conjugated ubiquitin from target proteins such as p53/TP53, RPS2/us5, RPS3/us3, RPS10/eS10, BECN1, SNX3 and CFTR. Acts as an essential regulator of p53/TP53 stability: in unstressed cells, specifically deubiquitinates p53/TP53 in the cytoplasm, leading to counteract MDM2 action and stabilize p53/TP53. Following DNA damage, translocates to the nucleus and deubiquitinates p53/TP53, leading to regulate the p53/TP53-dependent DNA damage response. Component of a regulatory loop that controls autophagy and p53/TP53 levels: mediates deubiquitination of BECN1, a key regulator of autophagy, leading to stabilize the PIK3C3/VPS34-containing complexes. In turn, PIK3C3/VPS34-containing complexes regulate USP10 stability, suggesting the existence of a regulatory system by which PIK3C3/VPS34-containing complexes regulate p53/TP53 protein levels via USP10 and USP13. Does not deubiquitinate MDM2. Plays a key role in 40S ribosome subunit recycling when a ribosome has stalled during translation: acts both by inhibiting formation of stress granules, which store stalled translation pre-initiation complexes, and mediating deubiquitination of 40S ribosome subunits. Acts as a negative regulator of stress granules formation by lowering G3BP1 and G3BP2 valence, thereby preventing G3BP1 and G3BP2 ability to undergo liquid-liquid phase separation (LLPS) and assembly of stress granules. Promotes 40S ribosome subunit recycling following ribosome dissociation in response to ribosome stalling by mediating deubiquitination of 40S ribosomal proteins RPS2/us5, RPS3/us3 and RPS10/eS10, thereby preventing their degradation by the proteasome. Part of a ribosome quality control that takes place when ribosomes have stalled during translation initiation (iRQC): USP10 acts by removing monoubiquitination of RPS2/us5 and RPS3/us3, promoting 40S ribosomal subunit recycling. Deubiquitinates CFTR in early endosomes, enhancing its endocytic recycling. Involved in a TANK-dependent negative feedback response to attenuate NF-kappa-B activation via deubiquitinating IKBKG or TRAF6 in response to interleukin-1-beta (IL1B) stimulation or upon DNA damage. Deubiquitinates TBX21 leading to its stabilization. Plays a negative role in the RLR signaling pathway upon RNA virus infection by blocking the RIGI-mediated MAVS activation. Mechanistically, removes the unanchored 'Lys-63'-linked polyubiquitin chains of MAVS to inhibit its aggregation, essential for its activation. The chain is Ubiquitin carboxyl-terminal hydrolase 10 from Homo sapiens (Human).